Consider the following 402-residue polypeptide: MSRVSQARNLGKYFLLIDNMLVVLGFFVVFPLISIRFVDQMGWAAVMVGIALGLRQFIQQGLGIFGGAIADRFGAKPMIVTGMLMRAAGFATMGIAHEPWLLWFSCLLSGLGGTLFDPPRSALVVKLIRPQQRGRFFSLLMMQDSASAVIGALLGSWLLQYDFRLVCATGAVLFVLCAAFNAWLLPAWKLSTVRTPVREGMTRVMRDKRFVTYVLTLAGYYMLAVQVMLMLPIMVNDVAGAPSAVKWMYAIEACLSLTLLYPIARWSEKHFRLEHRLMAGLLIMSLSMMPVGMVSGLQQLFTLICLFYIGSIIAEPARETLSASLADARARGSYMGFSRLGLAIGGAIGYIGGGWLFDLGKSAHQPELPWMMLGIIGIFTFLALGWQFSQKRAARRLLERDA.

Over 1 to 12 the chain is Cytoplasmic; sequence MSRVSQARNLGK. The chain crosses the membrane as a helical span at residues 13 to 33; the sequence is YFLLIDNMLVVLGFFVVFPLI. At 34–98 the chain is on the periplasmic side; that stretch reads SIRFVDQMGW…GFATMGIAHE (65 aa). A helical membrane pass occupies residues 99–116; sequence PWLLWFSCLLSGLGGTLF. The Cytoplasmic portion of the chain corresponds to 117 to 138; sequence DPPRSALVVKLIRPQQRGRFFS. The helical transmembrane segment at 139–159 threads the bilayer; the sequence is LLMMQDSASAVIGALLGSWLL. At 160 to 164 the chain is on the periplasmic side; the sequence is QYDFR. Residues 165–185 traverse the membrane as a helical segment; it reads LVCATGAVLFVLCAAFNAWLL. Topologically, residues 186 to 213 are cytoplasmic; the sequence is PAWKLSTVRTPVREGMTRVMRDKRFVTY. The helical transmembrane segment at 214 to 234 threads the bilayer; it reads VLTLAGYYMLAVQVMLMLPIM. Residues 235–243 are Periplasmic-facing; the sequence is VNDVAGAPS. The helical transmembrane segment at 244 to 264 threads the bilayer; the sequence is AVKWMYAIEACLSLTLLYPIA. Residues 265–276 lie on the Cytoplasmic side of the membrane; sequence RWSEKHFRLEHR. The chain crosses the membrane as a helical span at residues 277–297; the sequence is LMAGLLIMSLSMMPVGMVSGL. Over 298 to 299 the chain is Periplasmic; it reads QQ. Residues 300–320 form a helical membrane-spanning segment; sequence LFTLICLFYIGSIIAEPARET. The Cytoplasmic segment spans residues 321-339; that stretch reads LSASLADARARGSYMGFSR. The chain crosses the membrane as a helical span at residues 340–360; the sequence is LGLAIGGAIGYIGGGWLFDLG. Residues 361–367 are Periplasmic-facing; sequence KSAHQPE. The chain crosses the membrane as a helical span at residues 368-388; the sequence is LPWMMLGIIGIFTFLALGWQF. The Cytoplasmic portion of the chain corresponds to 389–402; it reads SQKRAARRLLERDA.

The protein belongs to the major facilitator superfamily. DHA1 family. MdtH (TC 2.A.1.2.21) subfamily.

The protein localises to the cell inner membrane. This is Multidrug resistance protein MdtH from Shigella flexneri.